The chain runs to 349 residues: Protein-glutamate methylesterase/protein-glutamine glutaminase (349 aa).

The region spanning 5–122 (RVLSVDDSAL…REGMLAYSEM (118 aa)) is the Response regulatory domain. Residue aspartate 56 is modified to 4-aspartylphosphate. In terms of domain architecture, CheB-type methylesterase spans 152–344 (LLSSEKLIAI…QQMLATISAG (193 aa)). Catalysis depends on residues serine 164, histidine 190, and aspartate 286.

It belongs to the CheB family. In terms of processing, phosphorylated by CheA. Phosphorylation of the N-terminal regulatory domain activates the methylesterase activity.

It localises to the cytoplasm. The catalysed reaction is [protein]-L-glutamate 5-O-methyl ester + H2O = L-glutamyl-[protein] + methanol + H(+). It carries out the reaction L-glutaminyl-[protein] + H2O = L-glutamyl-[protein] + NH4(+). Involved in chemotaxis. Part of a chemotaxis signal transduction system that modulates chemotaxis in response to various stimuli. Catalyzes the demethylation of specific methylglutamate residues introduced into the chemoreceptors (methyl-accepting chemotaxis proteins or MCP) by CheR. Also mediates the irreversible deamidation of specific glutamine residues to glutamic acid. In Shigella flexneri, this protein is Protein-glutamate methylesterase/protein-glutamine glutaminase.